A 968-amino-acid chain; its full sequence is MDATLTAREIRERFINFFRRNEHTYVHSSATIPLDDPTLLFANAGMNQFKPIFLNTIDPSHPMAKLSRAANTQKCIRAGGKHNDLDDVGKDVYHHTFFEMLGSWSFGDYFKELACKMALELLTQEFGIPVERLYVTYFGGDEAAGLEPDLECRQIWQNLGLDEARILPGNMKDNFWEMGDTGPCGPCSEIHYDRIGGRDAAHLVNQDDPNVLEIWNLVFIQYNRESDGVLKPLPKKSIDTGMGLERLVSVLQNKMSNYDTDLFMPYFEAIQKGTGARPYTGKVGAEDADGIDMAYRVLADHARTITVALADGGRPDNTGRGYVLRRILRRAVRYSHEKLNASRGFFATLVDVVVQSLGDAFPELKKDPEMVKDIINEEEVQFLKTLSRGRRILDRKIQSLGDCKTIPGDTAWLLYDTYGFPVDLTGLIAEEKGLVVDMNGFEEERRLAQLKSQGKGAGDEDLIMLDIYAIEELRAKGLEATDDSPKYNYQSDSSGSYVFECTVATVLALRREKMFVDEVVTGQECGVVLDKTCFYAEQGGQIYDEGYLVKVDDSSEDKTEFTVKNAQVRGGYVLHIGTIYGNLKVGDQVRLFIDEPRRRPVMSNHTATHILNFALRSVLGEADQKGSLVAPDRLRFDFTAKGAMSTQQIKKAEEIVNGMIEAAKPVYTQDCPLAAAKAIQGLRAVFDETYPDPVRVVSIGVPVSELLDDPCGPAGSLTSVEFCGGTHLRNSSHAGAFVIVTEEAIAKGIRRIVAVTGAEAQKALRKSETLKKSLSAMEAKVKAQTAPNKDVQREIADLGEALATAVIPQWQKDEQRETLKSLKKVMDDLDRASKADVQKRVLEKTKQLIDSNPNQPLVILEMESGASAKALNEALKLFKTHSPQTSAMLFTVDNEAGKITCLCQVPQNAANRGLKASEWVQQVSGLMDGKGGGKDMSAQATGKNVGCLQEALQLATSFAQLRLGDVKN.

M1 carries the N-acetylmethionine modification. ATP contacts are provided by residues R77, H95, W176, and 214–216; that span reads IWN. N216 and D239 together coordinate L-alanine. G243 provides a ligand contact to ATP. Phosphoserine occurs at positions 399 and 555. Positions 605, 609, 723, and 727 each coordinate Zn(2+). The Nuclear localization signal motif lies at 750-763; that stretch reads RRIVAVTGAEAQKA. K876 carries the post-translational modification N6-acetyllysine. At K943 the chain carries N6,N6,N6-trimethyllysine; alternate. K943 is subject to N6,N6-dimethyllysine; alternate. K943 is modified (N6-methyllysine; alternate).

Belongs to the class-II aminoacyl-tRNA synthetase family. Monomer. Interacts with ANKRD16; the interaction is direct. Requires Zn(2+) as cofactor. ISGylated. In terms of processing, methylation at 'Lys-943' by METTL21C.

The protein resides in the cytoplasm. Its subcellular location is the nucleus. It catalyses the reaction tRNA(Ala) + L-alanine + ATP = L-alanyl-tRNA(Ala) + AMP + diphosphate. It carries out the reaction (S)-lactate + ATP + H(+) = (S)-lactoyl-AMP + diphosphate. The enzyme catalyses (S)-lactoyl-AMP + L-lysyl-[protein] = N(6)-[(S)-lactoyl]-L-lysyl-[protein] + AMP + 2 H(+). The protein lactyltransferase activity is inhibited by beta-alanine. In terms of biological role, catalyzes the attachment of alanine to tRNA(Ala) in a two-step reaction: alanine is first activated by ATP to form Ala-AMP and then transferred to the acceptor end of tRNA(Ala). Also edits incorrectly charged tRNA(Ala) via its editing domain. In presence of high levels of lactate, also acts as a protein lactyltransferase that mediates lactylation of lysine residues in target proteins, such as TEAD1, TP53/p53 and YAP1. Protein lactylation takes place in a two-step reaction: lactate is first activated by ATP to form lactate-AMP and then transferred to lysine residues of target proteins. Acts as an inhibitor of TP53/p53 activity by catalyzing lactylation of TP53/p53. Acts as a positive regulator of the Hippo pathway by mediating lactylation of TEAD1 and YAP1. This is Alanine--tRNA ligase, cytoplasmic from Mus musculus (Mouse).